A 250-amino-acid chain; its full sequence is 2,3-bisphosphoglycerate-dependent phosphoglycerate mutase (250 aa).

Substrate-binding positions include 10-17 (RHGESQWN), 23-24 (TG), R62, 89-92 (ERHY), K100, 116-117 (RR), and 185-186 (GN). Catalysis depends on H11, which acts as the Tele-phosphohistidine intermediate. Residue E89 is the Proton donor/acceptor of the active site.

The protein belongs to the phosphoglycerate mutase family. BPG-dependent PGAM subfamily. In terms of assembly, homodimer.

The enzyme catalyses (2R)-2-phosphoglycerate = (2R)-3-phosphoglycerate. It functions in the pathway carbohydrate degradation; glycolysis; pyruvate from D-glyceraldehyde 3-phosphate: step 3/5. Its function is as follows. Catalyzes the interconversion of 2-phosphoglycerate and 3-phosphoglycerate. The protein is 2,3-bisphosphoglycerate-dependent phosphoglycerate mutase of Escherichia coli O139:H28 (strain E24377A / ETEC).